Reading from the N-terminus, the 325-residue chain is Glucosyl-3-phosphoglycerate synthase (325 aa).

UDP-alpha-D-glucose-binding positions include 37–41 (PSLNE), S71, K104, and 124–125 (DS). A Mn(2+)-binding site is contributed by D126. 171 to 174 (GRVT) is a (2R)-3-phosphoglycerate binding site. Residues 216–219 (YGVE) and 243–248 (RIHDNQ) each bind UDP-alpha-D-glucose. H245 serves as a coordination point for Mn(2+). N247 provides a ligand contact to (2R)-3-phosphoglycerate.

Belongs to the glycosyltransferase 2 family. In terms of assembly, homodimer in solution. The cofactor is Co(2+). Requires Mg(2+) as cofactor. Mn(2+) serves as cofactor. It depends on Ni(2+) as a cofactor. Zn(2+) is required as a cofactor.

The enzyme catalyses an NDP-alpha-D-glucose + (2R)-3-phosphoglycerate = (2R)-2-O-(alpha-D-glucopyranosyl)-3-phospho-glycerate + a ribonucleoside 5'-diphosphate + H(+). It catalyses the reaction (2R)-3-phosphoglycerate + UDP-alpha-D-glucose = (2R)-2-O-(alpha-D-glucopyranosyl)-3-phospho-glycerate + UDP + H(+). It carries out the reaction ADP-alpha-D-glucose + (2R)-3-phosphoglycerate = (2R)-2-O-(alpha-D-glucopyranosyl)-3-phospho-glycerate + ADP + H(+). With respect to regulation, inhibited by ADP and EDTA. Its function is as follows. Involved in the biosynthesis of the compatible solute mannosylglucosylglycerate through a phosphorylating pathway. Catalyzes the transfer of the glucose moiety from a nuleotide sugar such as UDP-alpha-D-glucose to the position 2 of 3-phospho-D-glycerate (3-PGA) to form glucosyl-3-phosphoglycerate (GPG). UDP-glucose is the preferred substrate, but it can be partially replaced by ADP-glucose. The polypeptide is Glucosyl-3-phosphoglycerate synthase (Petrotoga mobilis (strain DSM 10674 / SJ95)).